We begin with the raw amino-acid sequence, 485 residues long: NADH-quinone oxidoreductase subunit N (485 aa).

14 consecutive transmembrane segments (helical) span residues 8-28 (LIAL…MLSI), 35-55 (FVNA…LYFV), 75-95 (FYTG…YPWL), 105-125 (FYLL…ASHL), 127-147 (SLFI…GYAF), 159-179 (YTIL…LVYA), 203-223 (LLAG…LVPF), 235-255 (PAPV…GVLM), 271-291 (TVLG…AISQ), 297-317 (LLGY…IAVQ), 326-346 (VGVY…VVSL), 373-393 (AAVM…LGFI), 408-427 (WWLT…YYLR), and 449-469 (AFTA…VLGI).

The protein belongs to the complex I subunit 2 family. NDH-1 is composed of 13 different subunits. Subunits NuoA, H, J, K, L, M, N constitute the membrane sector of the complex.

It localises to the cell inner membrane. It carries out the reaction a quinone + NADH + 5 H(+)(in) = a quinol + NAD(+) + 4 H(+)(out). Its function is as follows. NDH-1 shuttles electrons from NADH, via FMN and iron-sulfur (Fe-S) centers, to quinones in the respiratory chain. The immediate electron acceptor for the enzyme in this species is believed to be ubiquinone. Couples the redox reaction to proton translocation (for every two electrons transferred, four hydrogen ions are translocated across the cytoplasmic membrane), and thus conserves the redox energy in a proton gradient. The chain is NADH-quinone oxidoreductase subunit N from Erwinia tasmaniensis (strain DSM 17950 / CFBP 7177 / CIP 109463 / NCPPB 4357 / Et1/99).